The following is a 362-amino-acid chain: Histidinol-phosphate aminotransferase (362 aa).

K218 is subject to N6-(pyridoxal phosphate)lysine.

This sequence belongs to the class-II pyridoxal-phosphate-dependent aminotransferase family. Histidinol-phosphate aminotransferase subfamily. In terms of assembly, homodimer. Pyridoxal 5'-phosphate serves as cofactor.

It catalyses the reaction L-histidinol phosphate + 2-oxoglutarate = 3-(imidazol-4-yl)-2-oxopropyl phosphate + L-glutamate. Its pathway is amino-acid biosynthesis; L-histidine biosynthesis; L-histidine from 5-phospho-alpha-D-ribose 1-diphosphate: step 7/9. This chain is Histidinol-phosphate aminotransferase, found in Ruegeria sp. (strain TM1040) (Silicibacter sp.).